The sequence spans 400 residues: ELAV-like protein 4 (400 aa).

The segment at Thr-12–Asp-48 is disordered. Over residues Ser-18–Ser-33 the composition is skewed to low complexity. The span at Arg-34–Ala-44 shows a compositional bias: polar residues. RRM domains are found at residues Thr-51–Pro-158, Ala-166–Asn-246, and Trp-317–Asn-395.

Belongs to the RRM elav family.

Its subcellular location is the cytoplasm. It localises to the perikaryon. It is found in the cell projection. The protein resides in the axon. The protein localises to the dendrite. Its subcellular location is the growth cone. In terms of biological role, RNA-binding protein that is involved in the post-transcriptional regulation of mRNAs. Plays a role in the regulation of mRNA stability, alternative splicing and translation. Binds to AU-rich element (ARE) sequences in the 3' untranslated region (3'UTR) of target mRNAs. Mainly plays a role in neuron-specific RNA processing. In Xenopus tropicalis (Western clawed frog), this protein is ELAV-like protein 4 (elavl4).